Here is a 1778-residue protein sequence, read N- to C-terminus: Nuclear receptor corepressor 1 (1778 aa).

The 52-residue stretch at 125–176 (DRLEEWSPEERSLFKSRQADHVKIFHGLTEFFVDKTASDLVLFYYMNKKTED) folds into the SANT domain. The Myb-like domain occupies 356–398 (WTDDEKTKLVTLINSSPTLDWVSISEGMNRRPNECKMQYDAMN). Acidic residues predominate over residues 409–421 (VDEEDGNGQEEGG). Disordered regions lie at residues 409-671 (VDEE…TVST), 992-1024 (SLTP…AGRS), 1195-1218 (KLQQ…ATPQ), 1276-1339 (QHLQ…SRSV), 1414-1434 (PPKT…RTLS), and 1646-1718 (AAPT…PPLP). 2 stretches are compositionally biased toward low complexity: residues 431–442 (SSAAARRSGLAR) and 450–469 (TPRA…VTRA). Residues 478 to 493 (DLGEEIDEMEIEDNDE) show a composition bias toward acidic residues. The span at 494 to 513 (DASRGSRGKDSKAPSDRDGS) shows a compositional bias: basic and acidic residues. Acidic residues-rich tracts occupy residues 517–545 (MEGD…EEEE) and 599–616 (ESDD…DVDE). Low complexity-rich tracts occupy residues 626 to 639 (SSSS…SVGG) and 649 to 671 (LVQQ…TVST). Over residues 1276–1285 (QHLQQQQQHH) the composition is skewed to low complexity. A compositionally biased stretch (low complexity) spans 1687 to 1696 (SSVNSNVSDV).

It belongs to the N-CoR nuclear receptor corepressors family. In terms of assembly, interacts with gex-3. Interacts (via C-terminus) with nhr-60. In larvae, expressed in pharyngeal neurons, ventral and dorsal nerve cords, tail neurons, egg-laying neurons and egg-laying muscles. Detected in the neurons of the pharyngeal nerve ring, head neurons, tail neurons and egg-laying muscles in adults. Detected in male-specific tail ganglia and rays in males.

Its subcellular location is the nucleus. In terms of biological role, mediates transcriptional repression by certain nuclear receptors. Plays a role in development and neuronal function. May play a role in muscle-specific oxidative mitochondrial metabolism. The protein is Nuclear receptor corepressor 1 of Caenorhabditis elegans.